A 358-amino-acid polypeptide reads, in one-letter code: UDP-N-acetylglucosamine--N-acetylmuramyl-(pentapeptide) pyrophosphoryl-undecaprenol N-acetylglucosamine transferase (358 aa).

UDP-N-acetyl-alpha-D-glucosamine contacts are provided by residues 11–13 (TGG), Arg-163, Ser-191, Ile-245, and Gln-290.

It belongs to the glycosyltransferase 28 family. MurG subfamily.

Its subcellular location is the cell inner membrane. It carries out the reaction di-trans,octa-cis-undecaprenyl diphospho-N-acetyl-alpha-D-muramoyl-L-alanyl-D-glutamyl-meso-2,6-diaminopimeloyl-D-alanyl-D-alanine + UDP-N-acetyl-alpha-D-glucosamine = di-trans,octa-cis-undecaprenyl diphospho-[N-acetyl-alpha-D-glucosaminyl-(1-&gt;4)]-N-acetyl-alpha-D-muramoyl-L-alanyl-D-glutamyl-meso-2,6-diaminopimeloyl-D-alanyl-D-alanine + UDP + H(+). It functions in the pathway cell wall biogenesis; peptidoglycan biosynthesis. Its function is as follows. Cell wall formation. Catalyzes the transfer of a GlcNAc subunit on undecaprenyl-pyrophosphoryl-MurNAc-pentapeptide (lipid intermediate I) to form undecaprenyl-pyrophosphoryl-MurNAc-(pentapeptide)GlcNAc (lipid intermediate II). This is UDP-N-acetylglucosamine--N-acetylmuramyl-(pentapeptide) pyrophosphoryl-undecaprenol N-acetylglucosamine transferase from Janthinobacterium sp. (strain Marseille) (Minibacterium massiliensis).